A 109-amino-acid polypeptide reads, in one-letter code: Fluoride-specific ion channel FluC 1 (109 aa).

The next 4 membrane-spanning stretches (helical) occupy residues 1-21 (MVIVYLAIACGLGALVRYFFS), 29-49 (LPLGTLIANLLGCFLIGVFYN), 55-75 (EVYAILATGFCGGLTTFSTLN), and 87-107 (VFYSYLTLTYIGGLVAIFLGI). The Na(+) site is built by Gly-66 and Thr-69.

The protein belongs to the fluoride channel Fluc/FEX (TC 1.A.43) family.

The protein localises to the cell membrane. The enzyme catalyses fluoride(in) = fluoride(out). Na(+) is not transported, but it plays an essential structural role and its presence is essential for fluoride channel function. Functionally, fluoride-specific ion channel. Important for reducing fluoride concentration in the cell, thus reducing its toxicity. This chain is Fluoride-specific ion channel FluC 1, found in Streptococcus pneumoniae serotype 4 (strain ATCC BAA-334 / TIGR4).